The chain runs to 170 residues: Large ribosomal subunit protein uL11 (170 aa).

It belongs to the universal ribosomal protein uL11 family. As to quaternary structure, part of the ribosomal stalk of the 50S ribosomal subunit. Interacts with L10 and the large rRNA to form the base of the stalk. L10 forms an elongated spine to which L12 dimers bind in a sequential fashion forming a multimeric L10(L12)X complex.

In terms of biological role, forms part of the ribosomal stalk which helps the ribosome interact with GTP-bound translation factors. The sequence is that of Large ribosomal subunit protein uL11 from Desulfurococcus amylolyticus (strain DSM 18924 / JCM 16383 / VKM B-2413 / 1221n) (Desulfurococcus kamchatkensis).